A 72-amino-acid chain; its full sequence is Mitotic-spindle organizing protein 1 (72 aa).

Belongs to the MOZART1 family. In terms of assembly, part of the gamma-tubulin complex.

The protein localises to the cytoplasm. It localises to the cytoskeleton. The protein resides in the microtubule organizing center. It is found in the centrosome. Its subcellular location is the spindle. In terms of biological role, required for gamma-tubulin complex recruitment to the centrosome. This chain is Mitotic-spindle organizing protein 1 (mzt1), found in Xenopus laevis (African clawed frog).